The primary structure comprises 426 residues: Bile acid CoA-transferase BaiF (426 aa).

The active-site Nucleophile is the Asp-168.

Belongs to the CoA-transferase III family.

The enzyme catalyses lithocholoyl-CoA + cholate = choloyl-CoA + lithocholate. It carries out the reaction deoxycholoyl-CoA + cholate = choloyl-CoA + deoxycholate. The catalysed reaction is allodeoxycholoyl-CoA + cholate = allodeoxycholate + choloyl-CoA. It catalyses the reaction allocholate + deoxycholoyl-CoA = allocholoyl-CoA + deoxycholate. The enzyme catalyses allocholate + lithocholoyl-CoA = allocholoyl-CoA + lithocholate. It carries out the reaction allocholate + allodeoxycholoyl-CoA = allocholoyl-CoA + allodeoxycholate. The catalysed reaction is lithocholoyl-CoA + chenodeoxycholate = chenodeoxycholoyl-CoA + lithocholate. It catalyses the reaction ursodeoxycholate + deoxycholoyl-CoA = ursodeoxycholoyl-CoA + deoxycholate. The enzyme catalyses ursodeoxycholate + lithocholoyl-CoA = ursodeoxycholoyl-CoA + lithocholate. It carries out the reaction allodeoxycholoyl-CoA + ursodeoxycholate = ursodeoxycholoyl-CoA + allodeoxycholate. The catalysed reaction is beta-muricholate + lithocholoyl-CoA = beta-muricholoyl-CoA + lithocholate. It catalyses the reaction beta-muricholate + deoxycholoyl-CoA = beta-muricholoyl-CoA + deoxycholate. The enzyme catalyses beta-muricholate + allodeoxycholoyl-CoA = beta-muricholoyl-CoA + allodeoxycholate. It carries out the reaction choloyl-CoA + H2O = cholate + CoA + H(+). The catalysed reaction is chenodeoxycholoyl-CoA + H2O = chenodeoxycholate + CoA + H(+). The protein operates within lipid metabolism; bile acid biosynthesis. Its function is as follows. Functions in the bile acid 7alpha-dehydroxylation pathway, which forms secondary bile acids via the 7alpha-dehydroxylation of primary bile acids, and is carried out by intestinal anaerobic bacteria. Acts as a bile acid CoA transferase with broad bile acid substrate specificity. Catalyzes the transfer of the CoA moiety of secondary bile acid-CoA compounds to primary bile acids. Can use lithocholoyl-CoA, deoxycholoyl-CoA and allodeoxycholoyl-CoA as bile acid CoA donors and cholate, allocholate, chenodeoxycholate, ursodeoxycholate, and beta-muricholate as bile acid CoA acceptors. Also displays CoA hydrolase activity, being able to catalyze the hydrolysis of choloyl-CoA, 3-dehydrocholoyl-CoA, and chenodeoxycholoyl-CoA, releasing CoA and the corresponding free bile acid. However, this latter activity may not represent the actual activity of this enzyme, since using a transferase rather than hydrolase, the bacteria conserve the thioester bond energy, saving ATP molecules. Shows no hydrolytic activity with acetyl-CoA, isovaleryl-CoA, palmitoyl-CoA, or phenylacetyl-CoA as substrates. The sequence is that of Bile acid CoA-transferase BaiF from Clostridium scindens (strain JCM 10418 / VPI 12708).